A 955-amino-acid polypeptide reads, in one-letter code: MAM domain-containing glycosylphosphatidylinositol anchor protein 1 (955 aa).

Residues 1–18 form the signal peptide; sequence MEVTCLLLLALIPFHCRG. Ig-like domains are found at residues 24–123 and 132–230; these read PAQA…KSIR and PMLT…KAIT. Asparagine 42 and asparagine 90 each carry an N-linked (GlcNAc...) asparagine glycan. 2 disulfides stabilise this stretch: cysteine 60–cysteine 108 and cysteine 157–cysteine 214. Residues asparagine 235, asparagine 247, asparagine 257, asparagine 307, and asparagine 331 are each glycosylated (N-linked (GlcNAc...) asparagine). The 84-residue stretch at 240–323 folds into the Ig-like 3 domain; that stretch reads PALKLSVNET…VGNPAKKTVN (84 aa). An intrachain disulfide couples cysteine 262 to cysteine 308. 3 Ig-like domains span residues 338 to 432, 440 to 532, and 539 to 631; these read PDVI…VEVN, PTIS…AQVQ, and PEVE…FQVS. Residues cysteine 357 and cysteine 415 are joined by a disulfide bond. Asparagine 432 is a glycosylation site (N-linked (GlcNAc...) asparagine). 2 cysteine pairs are disulfide-bonded: cysteine 463–cysteine 514 and cysteine 560–cysteine 615. Residues 643-743 form the Fibronectin type-III domain; it reads TPNPTRSHKL…SRIIHYTEPI (101 aa). Asparagine 655 and asparagine 747 each carry an N-linked (GlcNAc...) asparagine glycan. The region spanning 751–918 is the MAM domain; the sequence is NTCHFEDEKI…VTLKKGECPR (168 aa). Residues 779–788 are compositionally biased toward polar residues; sequence LTQNPKRSPN. A disordered region spans residues 779–798; it reads LTQNPKRSPNTGPPTDISGT. Asparagine 826 carries N-linked (GlcNAc...) asparagine glycosylation. The GPI-anchor amidated serine moiety is linked to residue serine 932. The propeptide at 933-955 is removed in mature form; that stretch reads GAPCQSSPQLWGPMAIFLLALQR.

In terms of assembly, interacts heterophilically through its MAM domain with proteins in axon-rich regions and through its Ig-like domains with proteins in differentiating muscle. Interacts (through the Ig-like domains) with NLGN2. In terms of tissue distribution, has been found in brain, heart, skeletal muscle and kidney. Found to be overexpressed in tumor tissues.

It localises to the cell membrane. Its function is as follows. Required for radial migration of cortical neurons in the superficial layer of the neocortex. Plays a role in the formation or maintenance of inhibitory synapses. May function by inhibiting the activity of NLGN2. The sequence is that of MAM domain-containing glycosylphosphatidylinositol anchor protein 1 (MDGA1) from Homo sapiens (Human).